The sequence spans 212 residues: Adenylate kinase (212 aa).

10–15 (GAGKGT) is a binding site for ATP. The tract at residues 30–59 (ALGDIFRTIIKTSTSEAELINNYVKQGELV) is NMP. AMP contacts are provided by residues arginine 36, 57-59 (ELV), 85-88 (GYPR), and glutamine 92. The LID stretch occupies residues 122–160 (GRYSCKNCRKIYNSYFLQPKTDNVCDVCGSSTFDYRKDD). Arginine 123 provides a ligand contact to ATP. Zn(2+) contacts are provided by cysteine 126 and cysteine 129. An ATP-binding site is contributed by 132–133 (IY). Zn(2+) is bound by residues cysteine 146 and cysteine 149. Residues arginine 157 and arginine 168 each coordinate AMP. Lysine 196 contributes to the ATP binding site.

This sequence belongs to the adenylate kinase family. As to quaternary structure, monomer.

It localises to the cytoplasm. The enzyme catalyses AMP + ATP = 2 ADP. It functions in the pathway purine metabolism; AMP biosynthesis via salvage pathway; AMP from ADP: step 1/1. Its function is as follows. Catalyzes the reversible transfer of the terminal phosphate group between ATP and AMP. Plays an important role in cellular energy homeostasis and in adenine nucleotide metabolism. The polypeptide is Adenylate kinase (Rickettsia akari (strain Hartford)).